The chain runs to 593 residues: DNA primase (593 aa).

The segment at 40–64 (CPFHHEKTPSFTVSQKKQFYHCFGC) adopts a CHC2-type zinc-finger fold. One can recognise a Toprim domain in the interval 260–342 (KQLLVVEGYM…GRQLKFIFLP (83 aa)). E266, D310, and D312 together coordinate Mg(2+).

Belongs to the DnaG primase family. As to quaternary structure, monomer. Interacts with DnaB. Requires Zn(2+) as cofactor. Mg(2+) serves as cofactor.

The enzyme catalyses ssDNA + n NTP = ssDNA/pppN(pN)n-1 hybrid + (n-1) diphosphate.. In terms of biological role, RNA polymerase that catalyzes the synthesis of short RNA molecules used as primers for DNA polymerase during DNA replication. The chain is DNA primase from Haemophilus influenzae (strain ATCC 51907 / DSM 11121 / KW20 / Rd).